The primary structure comprises 81 residues: Short neurotoxin 2 (81 aa).

Positions Met-1 to Thr-21 are cleaved as a signal peptide. Disulfide bonds link Cys-24/Cys-43, Cys-38/Cys-60, Cys-62/Cys-73, and Cys-74/Cys-79.

This sequence belongs to the three-finger toxin family. Short-chain subfamily. Type I alpha-neurotoxin sub-subfamily. Expressed by the venom gland.

The protein localises to the secreted. Binds to muscle nicotinic acetylcholine receptor (nAChR) and inhibit acetylcholine from binding to the receptor, thereby impairing neuromuscular transmission. In Hydrophis peronii (Spiny-headed seasnake), this protein is Short neurotoxin 2.